Reading from the N-terminus, the 449-residue chain is Putative F-box/FBD/LRR-repeat protein At3g49480 (449 aa).

In terms of domain architecture, F-box spans 11–59 (EDRISSLPDDLLVKILLCVPTKDAAATTFLSKRWRFVWRMLPRLNYIET). LRR repeat units lie at residues 60-91 (TSDV…WIDL), 153-180 (RLTL…DLFC), 182-206 (VYKD…KVTR), 235-260 (FRED…HIFD), 275-302 (VTVV…ALSP), and 327-352 (SEYD…LVDS). One can recognise an FBD domain in the interval 364-412 (WNQPSSIPRCLSSHLEIFEWDGYVGREDEKKIIRYILENSKYLKTAGIS).

In Arabidopsis thaliana (Mouse-ear cress), this protein is Putative F-box/FBD/LRR-repeat protein At3g49480.